Here is a 222-residue protein sequence, read N- to C-terminus: 7-cyano-7-deazaguanine synthase (222 aa).

11 to 21 (FSGGQDSTTCL) is a binding site for ATP. Residues cysteine 187, cysteine 195, cysteine 198, and cysteine 201 each contribute to the Zn(2+) site.

Belongs to the QueC family. Zn(2+) serves as cofactor.

It carries out the reaction 7-carboxy-7-deazaguanine + NH4(+) + ATP = 7-cyano-7-deazaguanine + ADP + phosphate + H2O + H(+). It participates in purine metabolism; 7-cyano-7-deazaguanine biosynthesis. In terms of biological role, catalyzes the ATP-dependent conversion of 7-carboxy-7-deazaguanine (CDG) to 7-cyano-7-deazaguanine (preQ(0)). In Actinobacillus pleuropneumoniae serotype 7 (strain AP76), this protein is 7-cyano-7-deazaguanine synthase.